A 313-amino-acid chain; its full sequence is Acetaldehyde dehydrogenase 3 (313 aa).

11–14 (SGNI) serves as a coordination point for NAD(+). Cys-129 acts as the Acyl-thioester intermediate in catalysis. NAD(+) contacts are provided by residues 160 to 168 (SAGPGTRAN) and Asn-288.

Belongs to the acetaldehyde dehydrogenase family.

It carries out the reaction acetaldehyde + NAD(+) + CoA = acetyl-CoA + NADH + H(+). This chain is Acetaldehyde dehydrogenase 3, found in Rhizorhabdus wittichii (strain DSM 6014 / CCUG 31198 / JCM 15750 / NBRC 105917 / EY 4224 / RW1) (Sphingomonas wittichii).